A 199-amino-acid polypeptide reads, in one-letter code: N-(5'-phosphoribosyl)anthranilate isomerase (199 aa).

This sequence belongs to the TrpF family.

It catalyses the reaction N-(5-phospho-beta-D-ribosyl)anthranilate = 1-(2-carboxyphenylamino)-1-deoxy-D-ribulose 5-phosphate. It functions in the pathway amino-acid biosynthesis; L-tryptophan biosynthesis; L-tryptophan from chorismate: step 3/5. This chain is N-(5'-phosphoribosyl)anthranilate isomerase, found in Campylobacter jejuni subsp. jejuni serotype O:2 (strain ATCC 700819 / NCTC 11168).